The following is a 331-amino-acid chain: Anthranilate phosphoribosyltransferase (331 aa).

Residues Gly78, 81–82, Thr86, 88–91, 106–114, and Ser118 each bind 5-phospho-alpha-D-ribose 1-diphosphate; these read GD, NVST, and KHGNYSVSS. Anthranilate is bound at residue Gly78. Ser90 is a binding site for Mg(2+). Asn109 contacts anthranilate. Residue Arg164 participates in anthranilate binding. Residues Asp222 and Glu223 each contribute to the Mg(2+) site.

Belongs to the anthranilate phosphoribosyltransferase family. In terms of assembly, homodimer. It depends on Mg(2+) as a cofactor.

The catalysed reaction is N-(5-phospho-beta-D-ribosyl)anthranilate + diphosphate = 5-phospho-alpha-D-ribose 1-diphosphate + anthranilate. It participates in amino-acid biosynthesis; L-tryptophan biosynthesis; L-tryptophan from chorismate: step 2/5. Its function is as follows. Catalyzes the transfer of the phosphoribosyl group of 5-phosphorylribose-1-pyrophosphate (PRPP) to anthranilate to yield N-(5'-phosphoribosyl)-anthranilate (PRA). The sequence is that of Anthranilate phosphoribosyltransferase from Haloferax volcanii (strain ATCC 29605 / DSM 3757 / JCM 8879 / NBRC 14742 / NCIMB 2012 / VKM B-1768 / DS2) (Halobacterium volcanii).